The following is a 141-amino-acid chain: ATP synthase epsilon chain (141 aa).

This sequence belongs to the ATPase epsilon chain family. F-type ATPases have 2 components, CF(1) - the catalytic core - and CF(0) - the membrane proton channel. CF(1) has five subunits: alpha(3), beta(3), gamma(1), delta(1), epsilon(1). CF(0) has three main subunits: a, b and c.

It localises to the cell inner membrane. Its function is as follows. Produces ATP from ADP in the presence of a proton gradient across the membrane. In Paraburkholderia phytofirmans (strain DSM 17436 / LMG 22146 / PsJN) (Burkholderia phytofirmans), this protein is ATP synthase epsilon chain.